A 191-amino-acid chain; its full sequence is Protein GrpE (191 aa).

2 stretches are compositionally biased toward basic and acidic residues: residues 1–19 (MKDE…EPES) and 29–42 (QQGE…EKEC). The disordered stretch occupies residues 1-42 (MKDEHNQEHDHLSQKEPESYQKACACKEQQGEEKQEASEKEC).

It belongs to the GrpE family. In terms of assembly, homodimer.

It is found in the cytoplasm. Its function is as follows. Participates actively in the response to hyperosmotic and heat shock by preventing the aggregation of stress-denatured proteins, in association with DnaK and GrpE. It is the nucleotide exchange factor for DnaK and may function as a thermosensor. Unfolded proteins bind initially to DnaJ; upon interaction with the DnaJ-bound protein, DnaK hydrolyzes its bound ATP, resulting in the formation of a stable complex. GrpE releases ADP from DnaK; ATP binding to DnaK triggers the release of the substrate protein, thus completing the reaction cycle. Several rounds of ATP-dependent interactions between DnaJ, DnaK and GrpE are required for fully efficient folding. The protein is Protein GrpE of Helicobacter pylori (strain HPAG1).